The sequence spans 146 residues: Transcription antitermination protein NusB (146 aa).

This sequence belongs to the NusB family.

Involved in transcription antitermination. Required for transcription of ribosomal RNA (rRNA) genes. Binds specifically to the boxA antiterminator sequence of the ribosomal RNA (rrn) operons. This chain is Transcription antitermination protein NusB, found in Herpetosiphon aurantiacus (strain ATCC 23779 / DSM 785 / 114-95).